A 522-amino-acid chain; its full sequence is Cell polarity protein mod5 (522 aa).

5 disordered regions span residues 1 to 83, 119 to 158, 170 to 192, 251 to 285, and 300 to 516; these read MSAL…PDGD, KRSASKSPKRSANGSTSEDISIEGSPSETAKGARSSFNSN, RRILEASQDSSRPGRYSYRTKSA, PLQPYSPPANETPASSSSSAKARPVSVPDMSSPVP, and YSPS…KLEK. Polar residues-rich tracts occupy residues 27 to 46, 66 to 76, and 131 to 146; these read PNTTVGFQFDNRNVGTSAPS, LPSSKQDTGSS, and NGSTSEDISIEGSPSE. Ser43 is subject to Phosphoserine. The span at 258–285 shows a compositional bias: low complexity; that stretch reads PANETPASSSSSAKARPVSVPDMSSPVP. The residue at position 303 (Ser303) is a Phosphoserine. Basic and acidic residues predominate over residues 308–318; sequence KVAETDSESRK. Polar residues predominate over residues 335-349; the sequence is GAQTQSTPNRISRSD. Residue Ser350 is modified to Phosphoserine. Polar residues-rich tracts occupy residues 363–396 and 404–431; these read NASTASSEAISQSMRSFQPQPNTGSPFPRFTSTN and DIPQSDANDSTVNLNQPNYANLTPTPQV. Residues 439–452 show a composition bias toward low complexity; sequence SRSSPLPSASVPAL. 2 stretches are compositionally biased toward basic and acidic residues: residues 472-482 and 495-516; these read HESEMPPHVTR and PKEKPSEKSEKPPKKKGSKLEK.

Interacts with tea1 and tea3.

The protein localises to the cell membrane. In terms of biological role, with tea1, acts in a positive-feedback loop in the microtubule-mediated regulation of cell polarity. Involved in the anchoring of tea1 at the cortex as well as the correct localization of tea3. The chain is Cell polarity protein mod5 (mod5) from Schizosaccharomyces pombe (strain 972 / ATCC 24843) (Fission yeast).